A 2605-amino-acid chain; its full sequence is Non-reducing polyketide synthase dbaI (2605 aa).

The segment at 97–243 (PNTLLIPLVM…PASEISDLHR (147 aa)) is N-terminal acylcarrier protein transacylase domain (SAT). Cys144 serves as the catalytic Nucleophile; for transacylase activity. Catalysis depends on His262, which acts as the Proton donor/acceptor; for transacylase activity. Positions 382-798 (ENDIAVVGMS…GSNASIVVTQ (417 aa)) constitute a Ketosynthase family 3 (KS3) domain. Catalysis depends on for beta-ketoacyl synthase activity residues Cys547, His682, and His721. A malonyl-CoA:ACP transacylase (MAT) domain region spans residues 908-1195 (FGGQVSTFVG…VTNMASRALG (288 aa)). The N-terminal hotdog fold stretch occupies residues 1285 to 1420 (PNTLLTFVGY…GRVIFRSISD (136 aa)). In terms of domain architecture, PKS/mFAS DH spans 1285–1596 (PNTLLTFVGY…YVKIPKASMS (312 aa)). The tract at residues 1316–1594 (LIRGHIIAQT…ISYVKIPKAS (279 aa)) is product template (PT) domain. His1320 serves as the catalytic Proton acceptor; for dehydratase activity. Positions 1447 to 1596 (EVDEVLQNRN…YVKIPKASMS (150 aa)) are C-terminal hotdog fold. Asp1504 acts as the Proton donor; for dehydratase activity in catalysis. The 75-residue stretch at 1665-1739 (GQLTQRIKSI…SLIKCVRKAM (75 aa)) folds into the Carrier domain. Ser1699 bears the O-(pantetheine 4'-phosphoryl)serine mark. Residues 1742-1780 (DADSAEYTTEQSTSEAADSDDKSTNYTTPSTPGEEALDM) are disordered. Over residues 1747 to 1757 (EYTTEQSTSEA) the composition is skewed to polar residues. Residues 1963-2151 (DWPLNRLFYR…VGYGHVDWTD (189 aa)) are methyltransferase domain. Positions 2230 to 2473 (VTGATGSLGC…LSWTPVDVVA (244 aa)) are NADPH-binding (R) domain.

It carries out the reaction 4 malonyl-CoA + acetyl-CoA + AH2 + S-adenosyl-L-methionine + 3 H(+) = 2,4-dihydroxy-3-methyl-6-(2-oxopropyl)benzaldehyde + A + S-adenosyl-L-homocysteine + 4 CO2 + 5 CoA + H2O. Its pathway is secondary metabolite biosynthesis. Functionally, non-reducing polyketide synthase; part of the gene cluster that mediates the biosynthesis of the antibiotic 2,4-dihydroxy-3-methyl-6-(2-oxopropyl)benzaldehyde (DHMBA) and its derivatives. The direct non-reducing polyketide synthase dbaI product is 2,4-dihydroxy-3-methyl-6-(2-oxopropyl)benzaldehyde (DHMBA), produced by condensation of one acetyl-CoA starter unit with 4 malonyl-CoA units and one methylation step. The FAD-dependent monooxygenase dbaH is responsible for the synthesis of yellow pigments derived from the oxidation of DHMBA. The roles of dbaB, C, E and F have still to be determined. The polypeptide is Non-reducing polyketide synthase dbaI (Emericella nidulans (strain FGSC A4 / ATCC 38163 / CBS 112.46 / NRRL 194 / M139) (Aspergillus nidulans)).